The primary structure comprises 475 residues: Argininosuccinate lyase (475 aa).

Belongs to the lyase 1 family. Argininosuccinate lyase subfamily.

It localises to the cytoplasm. It carries out the reaction 2-(N(omega)-L-arginino)succinate = fumarate + L-arginine. Its pathway is amino-acid biosynthesis; L-arginine biosynthesis; L-arginine from L-ornithine and carbamoyl phosphate: step 3/3. In Streptomyces coelicolor (strain ATCC BAA-471 / A3(2) / M145), this protein is Argininosuccinate lyase.